Consider the following 193-residue polypeptide: GTP cyclohydrolase 1 (193 aa).

The Zn(2+) site is built by Cys83, His86, and Cys154.

Belongs to the GTP cyclohydrolase I family. Homomer.

It carries out the reaction GTP + H2O = 7,8-dihydroneopterin 3'-triphosphate + formate + H(+). Its pathway is cofactor biosynthesis; 7,8-dihydroneopterin triphosphate biosynthesis; 7,8-dihydroneopterin triphosphate from GTP: step 1/1. This is GTP cyclohydrolase 1 from Porphyromonas gingivalis (strain ATCC 33277 / DSM 20709 / CIP 103683 / JCM 12257 / NCTC 11834 / 2561).